A 138-amino-acid polypeptide reads, in one-letter code: Large ribosomal subunit protein uL16 (138 aa).

Over residues 1 to 13 the composition is skewed to basic residues; that stretch reads MLQPSRRKFRKEQ. The interval 1–22 is disordered; that stretch reads MLQPSRRKFRKEQKGRNTGIAT.

Belongs to the universal ribosomal protein uL16 family. In terms of assembly, part of the 50S ribosomal subunit.

Functionally, binds 23S rRNA and is also seen to make contacts with the A and possibly P site tRNAs. This Methylibium petroleiphilum (strain ATCC BAA-1232 / LMG 22953 / PM1) protein is Large ribosomal subunit protein uL16.